We begin with the raw amino-acid sequence, 474 residues long: Aspartyl/glutamyl-tRNA(Asn/Gln) amidotransferase subunit B (474 aa).

Belongs to the GatB/GatE family. GatB subfamily. As to quaternary structure, heterotrimer of A, B and C subunits.

The enzyme catalyses L-glutamyl-tRNA(Gln) + L-glutamine + ATP + H2O = L-glutaminyl-tRNA(Gln) + L-glutamate + ADP + phosphate + H(+). It catalyses the reaction L-aspartyl-tRNA(Asn) + L-glutamine + ATP + H2O = L-asparaginyl-tRNA(Asn) + L-glutamate + ADP + phosphate + 2 H(+). Functionally, allows the formation of correctly charged Asn-tRNA(Asn) or Gln-tRNA(Gln) through the transamidation of misacylated Asp-tRNA(Asn) or Glu-tRNA(Gln) in organisms which lack either or both of asparaginyl-tRNA or glutaminyl-tRNA synthetases. The reaction takes place in the presence of glutamine and ATP through an activated phospho-Asp-tRNA(Asn) or phospho-Glu-tRNA(Gln). The protein is Aspartyl/glutamyl-tRNA(Asn/Gln) amidotransferase subunit B of Limosilactobacillus reuteri (strain DSM 20016) (Lactobacillus reuteri).